Consider the following 61-residue polypeptide: Small ribosomal subunit protein uS14 (61 aa).

Residues C24, C27, C40, and C43 each coordinate Zn(2+).

It belongs to the universal ribosomal protein uS14 family. Zinc-binding uS14 subfamily. As to quaternary structure, part of the 30S ribosomal subunit. Contacts proteins S3 and S10. Zn(2+) is required as a cofactor.

Functionally, binds 16S rRNA, required for the assembly of 30S particles and may also be responsible for determining the conformation of the 16S rRNA at the A site. The sequence is that of Small ribosomal subunit protein uS14 from Endomicrobium trichonymphae.